We begin with the raw amino-acid sequence, 418 residues long: EPS I polysaccharide export inner membrane protein EpsF (418 aa).

10 consecutive transmembrane segments (helical) span residues 21-41, 45-65, 142-162, 170-190, 222-242, 262-282, 296-316, 326-346, 347-367, and 377-397; these read VLVV…LPII, CAAI…LATA, PLLV…IAIY, YVVF…GSAI, AGTH…VLFL, LIVL…EFVM, SAWE…AWLL, MAFL…PAVG, ARLF…FFFA, and KTLA…IVSA.

The protein to S.marcescens SfuB.

The protein resides in the cell inner membrane. Probably involved in polymerization and/or export of exopolysaccharide EPS I which functions as a virulence factor. May play a role in export of EPS I or its intermediates across the membranes. This chain is EPS I polysaccharide export inner membrane protein EpsF (epsF), found in Ralstonia nicotianae (strain ATCC BAA-1114 / GMI1000) (Ralstonia solanacearum).